The sequence spans 357 residues: Transcription factor PCF6 (357 aa).

Positions 1 to 29 (MEAAVGDGEGGGGGGGRGKRGRGGGGGEM) are disordered. A compositionally biased stretch (gly residues) spans 7 to 16 (DGEGGGGGGG). The 59-residue stretch at 52–110 (GKDRHSKVYTAKGIRDRRVRLSVATAIQFYDLQDRLGFDQPSKAIEWLINAASPAIDTL) folds into the TCP domain. Disordered stretches follow at residues 125 to 162 (AADAAPTRRRSQQQQQQLSNKSGCSSTSETSKGSDKEV) and 281 to 307 (ANRGTLQSNSPSNMSGHHHHHHQQQLQ). Composition is skewed to polar residues over residues 142 to 155 (LSNKSGCSSTSETS) and 284 to 295 (GTLQSNSPSNMS).

Forms homodimers and heterodimers.

It localises to the nucleus. Transcription activator. Binds the promoter core sequence 5'-GGNCC-3'. This is Transcription factor PCF6 (PCF6) from Oryza sativa subsp. japonica (Rice).